The primary structure comprises 1249 residues: Clustered mitochondria protein homolog (1249 aa).

The tract at residues 1 to 34 (MAQTNGELEHSKAETPEQLTNGNHPEETQEEEQN) is disordered. Positions 321–565 (DITRSQENYL…RVTPLDVMWQ (245 aa)) constitute a Clu domain. 2 disordered regions span residues 610–638 (VETASKEKSEENAESKEEGSEEKSEEALD) and 874–907 (VPATNGASQEEGKKKKKKGGDSKSPARAASPEKP). Over residues 613–638 (ASKEKSEENAESKEEGSEEKSEEALD) the composition is skewed to basic and acidic residues. TPR repeat units follow at residues 975–1008 (AKLYHQLSMLYYQTDEKEAAVELARKAVIVTERT), 1017–1050 (ILSYLNLSLFEHASGNTKTALVYIKHAMDLWKII), and 1059–1092 (ITTMNNAAVMLQHLKQYSDSRKWFEASLTVCESL). The segment covering 1178 to 1191 (TRTLGTKVQPQVGQ) has biased composition (polar residues). The interval 1178–1249 (TRTLGTKVQP…KLRGSKKSSA (72 aa)) is disordered. Positions 1192-1205 (SAPSASGASSANPS) are enriched in low complexity.

This sequence belongs to the CLU family. As to quaternary structure, may associate with the eukaryotic translation initiation factor 3 (eIF-3) complex.

The protein localises to the cytoplasm. Functionally, mRNA-binding protein involved in proper cytoplasmic distribution of mitochondria. In Aspergillus oryzae (strain ATCC 42149 / RIB 40) (Yellow koji mold), this protein is Clustered mitochondria protein homolog.